We begin with the raw amino-acid sequence, 481 residues long: Probable glycine dehydrogenase (decarboxylating) subunit 2 (481 aa).

Residues 1–26 (MVIFEKTRGKNSPSVMPSKKGDVSNI) form a disordered region. Residue lysine 263 is modified to N6-(pyridoxal phosphate)lysine.

This sequence belongs to the GcvP family. C-terminal subunit subfamily. As to quaternary structure, the glycine cleavage system is composed of four proteins: P, T, L and H. In this organism, the P 'protein' is a heterodimer of two subunits. Pyridoxal 5'-phosphate is required as a cofactor.

The catalysed reaction is N(6)-[(R)-lipoyl]-L-lysyl-[glycine-cleavage complex H protein] + glycine + H(+) = N(6)-[(R)-S(8)-aminomethyldihydrolipoyl]-L-lysyl-[glycine-cleavage complex H protein] + CO2. In terms of biological role, the glycine cleavage system catalyzes the degradation of glycine. The P protein binds the alpha-amino group of glycine through its pyridoxal phosphate cofactor; CO(2) is released and the remaining methylamine moiety is then transferred to the lipoamide cofactor of the H protein. This chain is Probable glycine dehydrogenase (decarboxylating) subunit 2, found in Francisella tularensis subsp. mediasiatica (strain FSC147).